We begin with the raw amino-acid sequence, 262 residues long: pFDCC methylesterase MES16 (262 aa).

Catalysis depends on Ser87, which acts as the Acyl-ester intermediate. Catalysis depends on charge relay system residues Asp211 and His239.

This sequence belongs to the AB hydrolase superfamily. Methylesterase family.

Its subcellular location is the cytoplasm. It carries out the reaction methyl (indol-3-yl)acetate + H2O = (indol-3-yl)acetate + methanol + H(+). It catalyses the reaction methyl (-)-jasmonate + H2O = jasmonate + methanol + H(+). The catalysed reaction is primary fluorescent dioxobilin-type chlorophyll catabolite + H2O = O13(4)-desmethyl pFDCC + methanol + H(+). It functions in the pathway plant hormone biosynthesis. It participates in lipid metabolism; oxylipin biosynthesis. The protein operates within porphyrin-containing compound metabolism; chlorophyll degradation. In terms of biological role, involved in the chlorophyll breakdown by its action in fluorescent chlorophyll catabolites (FCCs) demethylation. Demethylates the C13(2)-carboxymethyl group present at the isocyclic ring of chlorophyll. Uses primary fluorescent dioxobilin-type chlorophyll catabolite (pFDCC) as substrate to produce O13(4)-desmethyl pFDCC. Also able to catalyze pheophorbides in vitro. Methylesterase shown to have carboxylesterase activity, methyl indole-3-acetic acid (MeIAA) esterase activity and methyl jasmonate (MeJA) esterase activity in vitro. The polypeptide is pFDCC methylesterase MES16 (Arabidopsis thaliana (Mouse-ear cress)).